Reading from the N-terminus, the 307-residue chain is Ras-related protein RabR (307 aa).

Residues M1–S10 are compositionally biased toward polar residues. The interval M1–N45 is disordered. Over residues T11 to N45 the composition is skewed to low complexity. G61–G68 contacts GTP. Positions E83–R92 match the Effector region motif. Position 122–126 (N122–H126) interacts with GTP. A compositionally biased stretch (low complexity) spans N175–S185. Residues N175–P223 are disordered. The span at T186–Q202 shows a compositional bias: polar residues. Position 230 to 233 (N230 to D233) interacts with GTP. A Cysteine methyl ester modification is found at C304. The S-geranylgeranyl cysteine moiety is linked to residue C304. The propeptide at N305 to M307 is removed in mature form.

The protein belongs to the small GTPase superfamily. Rab family.

It is found in the cell membrane. In Dictyostelium discoideum (Social amoeba), this protein is Ras-related protein RabR (rabR).